The primary structure comprises 1015 residues: Probable beta-galactosidase B (1015 aa).

The N-terminal stretch at 1 to 20 is a signal peptide; the sequence is MAHIYRLLLLLLSNLWFSTA. N-linked (GlcNAc...) asparagine glycosylation occurs at Asn-23. Tyr-90 is a substrate binding site. N-linked (GlcNAc...) asparagine glycosylation is found at Asn-99 and Asn-100. Substrate contacts are provided by Asn-135, Ala-136, and Glu-137. An N-linked (GlcNAc...) asparagine glycan is attached at Asn-172. Asn-195 contacts substrate. The active-site Proton donor is the Glu-196. Asn-211 is a glycosylation site (N-linked (GlcNAc...) asparagine). A substrate-binding site is contributed by Tyr-265. Cysteines 271 and 324 form a disulfide. Glu-308 serves as the catalytic Nucleophile. Substrate is bound at residue Tyr-373. N-linked (GlcNAc...) asparagine glycosylation is found at Asn-411, Asn-456, Asn-554, Asn-679, Asn-735, Asn-775, and Asn-821.

The protein belongs to the glycosyl hydrolase 35 family.

The protein localises to the secreted. The catalysed reaction is Hydrolysis of terminal non-reducing beta-D-galactose residues in beta-D-galactosides.. Functionally, cleaves beta-linked terminal galactosyl residues from gangliosides, glycoproteins, and glycosaminoglycans. In Aspergillus fumigatus (strain CBS 144.89 / FGSC A1163 / CEA10) (Neosartorya fumigata), this protein is Probable beta-galactosidase B (lacB).